The sequence spans 163 residues: Phosphopantetheine adenylyltransferase (163 aa).

Residue Ser-8 participates in substrate binding. ATP contacts are provided by residues 8–9 (SF) and His-16. Substrate is bound by residues Lys-40, Thr-72, and Arg-86. ATP contacts are provided by residues 87–89 (GLR), Glu-97, and 122–128 (HSFLSSS).

This sequence belongs to the bacterial CoaD family. In terms of assembly, homohexamer. The cofactor is Mg(2+).

It is found in the cytoplasm. It carries out the reaction (R)-4'-phosphopantetheine + ATP + H(+) = 3'-dephospho-CoA + diphosphate. The protein operates within cofactor biosynthesis; coenzyme A biosynthesis; CoA from (R)-pantothenate: step 4/5. Reversibly transfers an adenylyl group from ATP to 4'-phosphopantetheine, yielding dephospho-CoA (dPCoA) and pyrophosphate. The chain is Phosphopantetheine adenylyltransferase from Parasynechococcus marenigrum (strain WH8102).